The sequence spans 512 residues: 2-isopropylmalate synthase (512 aa).

In terms of domain architecture, Pyruvate carboxyltransferase spans 4–266; the sequence is IQFFDTTLRD…ETNIVLNQFK (263 aa). Mn(2+)-binding residues include D13, H201, H203, and N237. The tract at residues 390–512 is regulatory domain; it reads ELKHLQVQYV…SKQADFEEVK (123 aa).

Belongs to the alpha-IPM synthase/homocitrate synthase family. LeuA type 1 subfamily. In terms of assembly, homodimer. The cofactor is Mn(2+).

The protein resides in the cytoplasm. It catalyses the reaction 3-methyl-2-oxobutanoate + acetyl-CoA + H2O = (2S)-2-isopropylmalate + CoA + H(+). The protein operates within amino-acid biosynthesis; L-leucine biosynthesis; L-leucine from 3-methyl-2-oxobutanoate: step 1/4. Functionally, catalyzes the condensation of the acetyl group of acetyl-CoA with 3-methyl-2-oxobutanoate (2-ketoisovalerate) to form 3-carboxy-3-hydroxy-4-methylpentanoate (2-isopropylmalate). This is 2-isopropylmalate synthase from Listeria innocua serovar 6a (strain ATCC BAA-680 / CLIP 11262).